Reading from the N-terminus, the 309-residue chain is DDRGK domain-containing protein 1 (309 aa).

Residues 1–2 lie on the Lumenal side of the membrane; it reads MD. Residues 3-23 traverse the membrane as a helical segment; that stretch reads LIILVGIASALLVVILTIFFL. Over 24 to 309 the chain is Cytoplasmic; that stretch reads QKKKGGTEAK…VSAGAGEGSS (286 aa). The disordered stretch occupies residues 30–178; that stretch reads TEAKEAAAPP…RLVKEERERK (149 aa). The segment covering 53 to 84 has biased composition (low complexity); sequence RRAQIARNQRNRLRQNAPAAAPAAAAALQAAD. Residues 85–95 show a composition bias toward acidic residues; the sequence is AEGDNDDENPD. Basic and acidic residues predominate over residues 107 to 178; sequence LDEKMGAKKR…RLVKEERERK (72 aa).

It belongs to the DDRGK1 family. As to quaternary structure, interacts with Atg9; the interaction is transient.

It localises to the endoplasmic reticulum membrane. Substrate adapter for ufmylation, the covalent attachment of the ubiquitin-like modifier UFM1 to substrate proteins. Required for ufmylation of Atg9; protects the nervous system during aging, possibly by stabilizing Atg9 and supporting its function. The polypeptide is DDRGK domain-containing protein 1 (Drosophila persimilis (Fruit fly)).